The following is a 226-amino-acid chain: Ribose-5-phosphate isomerase A (226 aa).

Residues 29 to 32, 84 to 87, and 97 to 100 contribute to the substrate site; these read TGST, DGAD, and KGGG. Residue glutamate 106 is the Proton acceptor of the active site. Residue lysine 124 coordinates substrate.

This sequence belongs to the ribose 5-phosphate isomerase family. As to quaternary structure, homodimer.

The enzyme catalyses aldehydo-D-ribose 5-phosphate = D-ribulose 5-phosphate. It functions in the pathway carbohydrate degradation; pentose phosphate pathway; D-ribose 5-phosphate from D-ribulose 5-phosphate (non-oxidative stage): step 1/1. Its function is as follows. Catalyzes the reversible conversion of ribose-5-phosphate to ribulose 5-phosphate. In Methanothermobacter thermautotrophicus (strain ATCC 29096 / DSM 1053 / JCM 10044 / NBRC 100330 / Delta H) (Methanobacterium thermoautotrophicum), this protein is Ribose-5-phosphate isomerase A.